The primary structure comprises 154 residues: Transcriptional repressor NrdR (154 aa).

The segment at 3 to 34 (CPFCGANDTKVIDSRLVAEGEQVRRRRECVAC) is a zinc-finger region. Residues 49-139 (PRLIKQDGTR…VYRRFQDLDE (91 aa)) form the ATP-cone domain.

This sequence belongs to the NrdR family. Requires Zn(2+) as cofactor.

Negatively regulates transcription of bacterial ribonucleotide reductase nrd genes and operons by binding to NrdR-boxes. In Pseudomonas putida (strain ATCC 700007 / DSM 6899 / JCM 31910 / BCRC 17059 / LMG 24140 / F1), this protein is Transcriptional repressor NrdR.